The following is a 326-amino-acid chain: UDP-N-acetylglucosamine transporter (326 aa).

Transmembrane regions (helical) follow at residues Asn4–Met24, Leu38–Val58, Leu136–Trp156, Phe174–Phe194, Leu212–Val232, Gln243–Ile263, Ile269–Trp289, and Phe293–Tyr313.

Belongs to the nucleotide-sugar transporter family. SLC35A subfamily. As to quaternary structure, interacts with SLC35A2; the interaction is reduced in the presence of SLC35A4. Found in a complex with SLC35A2 and SLC35A4. Interacts with MGAT4B. Post-translationally, O-Glcnacylation regulates the stability of SLC35A3 and the specific complex formation with MGAT4B.

It localises to the golgi apparatus membrane. It carries out the reaction UMP(out) + UDP-N-acetyl-alpha-D-glucosamine(in) = UMP(in) + UDP-N-acetyl-alpha-D-glucosamine(out). In terms of biological role, transports diphosphate-N-acetylglucosamine (UDP-GlcNAc) from the cytosol into the lumen of the Golgi apparatus, functioning as an antiporter that exchanges UDP-N-acetyl-alpha-D-glucosamine for UMP. May supply UDP-GlcNAc as substrate for Golgi-resident glycosyltransferases that generate highly branched, multiantennary complex N-glycans and keratan sulfate. However, the exact role of SLC35A3 still needs to be elucidated, it could be a member of a catalytically more efficient multiprotein complex rather than function independently as a single transporter. The sequence is that of UDP-N-acetylglucosamine transporter (Slc35a3) from Mus musculus (Mouse).